Consider the following 302-residue polypeptide: 4-hydroxy-tetrahydrodipicolinate synthase (302 aa).

Thr56 contacts pyruvate. The active-site Proton donor/acceptor is the Tyr145. The Schiff-base intermediate with substrate role is filled by Lys173. Pyruvate is bound at residue Val215.

Belongs to the DapA family. In terms of assembly, homotetramer; dimer of dimers.

The protein resides in the cytoplasm. The enzyme catalyses L-aspartate 4-semialdehyde + pyruvate = (2S,4S)-4-hydroxy-2,3,4,5-tetrahydrodipicolinate + H2O + H(+). It functions in the pathway amino-acid biosynthesis; L-lysine biosynthesis via DAP pathway; (S)-tetrahydrodipicolinate from L-aspartate: step 3/4. In terms of biological role, catalyzes the condensation of (S)-aspartate-beta-semialdehyde [(S)-ASA] and pyruvate to 4-hydroxy-tetrahydrodipicolinate (HTPA). In Prochlorococcus marinus subsp. pastoris (strain CCMP1986 / NIES-2087 / MED4), this protein is 4-hydroxy-tetrahydrodipicolinate synthase.